A 190-amino-acid chain; its full sequence is Peptidyl-tRNA hydrolase (190 aa).

Phe-14 contributes to the tRNA binding site. Residue His-19 is the Proton acceptor of the active site. 3 residues coordinate tRNA: Met-64, Asn-66, and Asn-112.

The protein belongs to the PTH family. Monomer.

The protein localises to the cytoplasm. The enzyme catalyses an N-acyl-L-alpha-aminoacyl-tRNA + H2O = an N-acyl-L-amino acid + a tRNA + H(+). Hydrolyzes ribosome-free peptidyl-tRNAs (with 1 or more amino acids incorporated), which drop off the ribosome during protein synthesis, or as a result of ribosome stalling. Functionally, catalyzes the release of premature peptidyl moieties from peptidyl-tRNA molecules trapped in stalled 50S ribosomal subunits, and thus maintains levels of free tRNAs and 50S ribosomes. The polypeptide is Peptidyl-tRNA hydrolase (Staphylococcus epidermidis (strain ATCC 35984 / DSM 28319 / BCRC 17069 / CCUG 31568 / BM 3577 / RP62A)).